Consider the following 182-residue polypeptide: Large ribosomal subunit protein uL5 (182 aa).

This sequence belongs to the universal ribosomal protein uL5 family. Part of the 50S ribosomal subunit; part of the 5S rRNA/L5/L18/L25 subcomplex. Contacts the 5S rRNA and the P site tRNA. Forms a bridge to the 30S subunit in the 70S ribosome.

Functionally, this is one of the proteins that bind and probably mediate the attachment of the 5S RNA into the large ribosomal subunit, where it forms part of the central protuberance. In the 70S ribosome it contacts protein S13 of the 30S subunit (bridge B1b), connecting the 2 subunits; this bridge is implicated in subunit movement. Contacts the P site tRNA; the 5S rRNA and some of its associated proteins might help stabilize positioning of ribosome-bound tRNAs. The protein is Large ribosomal subunit protein uL5 of Coxiella burnetii (strain CbuK_Q154) (Coxiella burnetii (strain Q154)).